The sequence spans 107 residues: Nucleoid-associated protein RT0857 (107 aa).

It belongs to the YbaB/EbfC family. Homodimer.

The protein localises to the cytoplasm. The protein resides in the nucleoid. Its function is as follows. Binds to DNA and alters its conformation. May be involved in regulation of gene expression, nucleoid organization and DNA protection. The sequence is that of Nucleoid-associated protein RT0857 from Rickettsia typhi (strain ATCC VR-144 / Wilmington).